We begin with the raw amino-acid sequence, 64 residues long: Conotoxin VnMRCL-04 (64 aa).

A signal peptide spans Met-1 to Ala-22. Positions Arg-23 to Arg-48 are excised as a propeptide. A Tryptophan amide modification is found at Trp-63.

Belongs to the conotoxin T superfamily. Post-translationally, contains 2 disulfide bonds that can be either 'C1-C3, C2-C4' or 'C1-C4, C2-C3', since these disulfide connectivities have been observed for conotoxins with cysteine framework V (for examples, see AC P0DQQ7 and AC P81755). As to expression, expressed by the venom duct.

Its subcellular location is the secreted. This is Conotoxin VnMRCL-04 from Conus ventricosus (Mediterranean cone).